The following is a 545-amino-acid chain: Cryptochrome-1 (545 aa).

The Photolyase/cryptochrome alpha/beta domain maps to 3-140 (INNILWFRHG…RCVENVSHTL (138 aa)). FAD is bound by residues R237, S265, S267, Q308, H375, 407–409 (DAD), C413, and N416.

It belongs to the DNA photolyase class-1 family. Interacts with tim and per; promoted by light conditions. FAD serves as cofactor.

Its subcellular location is the cytoplasm. It is found in the perinuclear region. The protein localises to the nucleus. Blue light-dependent regulator that is the input of the circadian feedback loop. Has no photolyase activity for cyclobutane pyrimidine dimers or 6-4 photoproducts. Regulation of expression by light suggests a role in photoreception for locomotor activity rhythms. Functions, together with per, as a transcriptional repressor required for the oscillation of peripheral circadian clocks and for the correct specification of clock cells. Genes directly activated by the transcription factors Clock (Clk) and cycle (cyc) are repressed by cry. The chain is Cryptochrome-1 from Anopheles gambiae (African malaria mosquito).